The following is a 124-amino-acid chain: Putative C(50) carotenoid beta-cyclase subunit A (124 aa).

A run of 3 helical transmembrane segments spans residues 1–21 (MIGL…LVID), 34–54 (AAAL…VLGV), and 78–98 (FEEV…AAGV).

It belongs to the lycopene beta-cyclase family. As to quaternary structure, may form a complex with LbtBC.

Its subcellular location is the cell membrane. Its pathway is carotenoid biosynthesis. In terms of biological role, involved in the biosynthesis of C(50) beta-cyclic carotenoids. May have C(50) carotenoid beta-cyclase activity and produce the C(50) beta-cyclic carotenoid C.p.450 from the C(50) carotenoid dihydrobisanhydrobacterioruberin (DH-BABR). The sequence is that of Putative C(50) carotenoid beta-cyclase subunit A from Dietzia sp. (strain CQ4).